The sequence spans 1408 residues: DNA-directed RNA polymerase subunit beta' (1408 aa).

Cys-70, Cys-72, Cys-85, and Cys-88 together coordinate Zn(2+). 3 residues coordinate Mg(2+): Asp-460, Asp-462, and Asp-464. Zn(2+) is bound by residues Cys-814, Cys-888, Cys-895, and Cys-898.

The protein belongs to the RNA polymerase beta' chain family. As to quaternary structure, the RNAP catalytic core consists of 2 alpha, 1 beta, 1 beta' and 1 omega subunit. When a sigma factor is associated with the core the holoenzyme is formed, which can initiate transcription. Mg(2+) serves as cofactor. Zn(2+) is required as a cofactor.

The enzyme catalyses RNA(n) + a ribonucleoside 5'-triphosphate = RNA(n+1) + diphosphate. DNA-dependent RNA polymerase catalyzes the transcription of DNA into RNA using the four ribonucleoside triphosphates as substrates. This is DNA-directed RNA polymerase subunit beta' from Serratia proteamaculans (strain 568).